The following is a 217-amino-acid chain: tRNA (guanine-N(7)-)-methyltransferase (217 aa).

Residues E44, E69, D96, and D118 each contribute to the S-adenosyl-L-methionine site. D118 is a catalytic residue. Residues K122, D154, and 191–194 each bind substrate; that span reads TEYE.

The protein belongs to the class I-like SAM-binding methyltransferase superfamily. TrmB family.

The enzyme catalyses guanosine(46) in tRNA + S-adenosyl-L-methionine = N(7)-methylguanosine(46) in tRNA + S-adenosyl-L-homocysteine. Its pathway is tRNA modification; N(7)-methylguanine-tRNA biosynthesis. Its function is as follows. Catalyzes the formation of N(7)-methylguanine at position 46 (m7G46) in tRNA. The polypeptide is tRNA (guanine-N(7)-)-methyltransferase (Bacillus cereus (strain B4264)).